Here is a 464-residue protein sequence, read N- to C-terminus: GDNF family receptor alpha-2 (464 aa).

The N-terminal stretch at 1–21 (MILANVFCLFFFLDETLRSLA) is a signal peptide. 14 disulfides stabilise this stretch: C40-C93, C47-C53, C63-C78, C95-C105, C161-C222, C168-C174, C185-C200, C195-C241, C224-C229, C251-C323, C258-C264, C275-C293, C285-C347, and C325-C335. N-linked (GlcNAc...) asparagine glycosylation is present at N52. N-linked (GlcNAc...) asparagine glycosylation is found at N357 and N413. S444 carries the GPI-anchor amidated serine lipid modification. The propeptide at 445–464 (RARPSAALTVLSVLMLKLAL) is removed in mature form.

The protein belongs to the GDNFR family. Interacts with NRTN ligand and RET: forms a 2:2:2 ternary complex composed of NRTN ligand, GFRA2 and RET receptor. Also forms a 4:4:4 tetrameric complex composed of 4 copies of NRTN ligand, GFRA2 and RET receptor, which prevents endocytosis of RET. Interacts with SORL1.

The protein resides in the cell membrane. Functionally, receptor for neurturin (NRTN), a growth factor that supports the survival of sympathetic neurons. NRTN-binding leads to autophosphorylation and activation of the RET receptor. Also able to mediate GDNF signaling through the RET tyrosine kinase receptor. This Pongo abelii (Sumatran orangutan) protein is GDNF family receptor alpha-2 (GFRA2).